Here is a 320-residue protein sequence, read N- to C-terminus: Stress-involved WYL domain-containing regulator (320 aa).

Residues 7-65 form the HTH deoR-type domain; that stretch reads TTGRVVQLLGLLQSRRVWTGEELAERLGVTGRSVRRDIERLRELGYPVHASKGQGGGYQ. Positions 24–43 form a DNA-binding region, H-T-H motif; the sequence is WTGEELAERLGVTGRSVRRD. The WYL domain maps to 139-218; it reads DTAVAPDVLM…SDVRATGTTF (80 aa). Positions 245 to 320 are WCX domain; sequence VRYFAPEKVV…MADRLRRAVR (76 aa).

As to quaternary structure, homodimer.

In terms of biological role, transcriptional activator. Acts as a transcriptional activator of the MSMEG_1357-56 operon upon genotoxic stress. Controls adjacent genes that belong to the DinB/YfiT-like putative metalloenzymes superfamily by upregulating their expression in response to various genotoxic stress conditions, including exposure to H(2)O(2) or the natural antibiotic zeocin, as well as mitomycin C (MMC), diamide and UVC radiation. Upon genotoxic stress, upregulates two genes encoding proteins of the DinB/YfiT-like putative metalloenzymes superfamily, MSMEG_1357 and MSMEG_1356. Binds different forms of single-stranded DNA (ssDNA) with high affinity, primarily through its characteristic WYL domain. Binds nucleic acids with single-stranded regions, such as polyT 20mer ssDNA, 5' tailed, 3' tailed and fork DNA, but not ssRNA. The polypeptide is Stress-involved WYL domain-containing regulator (Mycolicibacterium smegmatis (strain ATCC 700084 / mc(2)155) (Mycobacterium smegmatis)).